A 951-amino-acid polypeptide reads, in one-letter code: Glycine dehydrogenase (decarboxylating) 1 (951 aa).

N6-(pyridoxal phosphate)lysine is present on Lys703.

This sequence belongs to the GcvP family. As to quaternary structure, the glycine cleavage system is composed of four proteins: P, T, L and H. Pyridoxal 5'-phosphate serves as cofactor.

The catalysed reaction is N(6)-[(R)-lipoyl]-L-lysyl-[glycine-cleavage complex H protein] + glycine + H(+) = N(6)-[(R)-S(8)-aminomethyldihydrolipoyl]-L-lysyl-[glycine-cleavage complex H protein] + CO2. In terms of biological role, the glycine cleavage system catalyzes the degradation of glycine. The P protein binds the alpha-amino group of glycine through its pyridoxal phosphate cofactor; CO(2) is released and the remaining methylamine moiety is then transferred to the lipoamide cofactor of the H protein. This is Glycine dehydrogenase (decarboxylating) 1 from Pseudomonas fluorescens (strain ATCC BAA-477 / NRRL B-23932 / Pf-5).